The sequence spans 187 residues: MAMEGKSRRFAVACGVLSQYVRAEQKMAAAAGAAPARAVTTLSLMPGAEVVVEEEERREVGEEEAGPATAPAAPLTIFYGGRMVVFEDFPADKAAEVMRMASSGMAAAPAQREGAALADMPIMRKASLQRFFAKRKDRLAATTPYARPSPAETKASEPEEKKTPTSWLDLAASASAAARRDSLTIAL.

The 36-residue stretch at 68 to 103 (ATAPAAPLTIFYGGRMVVFEDFPADKAAEVMRMASS) folds into the Tify domain. A Jas motif is present at residues 121-145 (PIMRKASLQRFFAKRKDRLAATTPY). A Nuclear localization signal motif is present at residues 123–130 (MRKASLQR). The disordered stretch occupies residues 139–168 (LAATTPYARPSPAETKASEPEEKKTPTSWL). A compositionally biased stretch (basic and acidic residues) spans 154 to 163 (KASEPEEKKT).

It belongs to the TIFY/JAZ family. Interacts with COI1B in a coronatine-dependent manner. Coronatine is an analog of jasmonoyl isoleucine (JA-Ile). In terms of processing, ubiquitinated. Targeted for degradation by the SCF(COI1) E3 ubiquitin ligase-proteasome pathway during jasmonate signaling.

The protein resides in the nucleus. Its function is as follows. Repressor of jasmonate responses. The polypeptide is Protein TIFY 11b (Oryza sativa subsp. japonica (Rice)).